A 71-amino-acid chain; its full sequence is Exodeoxyribonuclease 7 small subunit (71 aa).

The protein belongs to the XseB family. Heterooligomer composed of large and small subunits.

The protein resides in the cytoplasm. It catalyses the reaction Exonucleolytic cleavage in either 5'- to 3'- or 3'- to 5'-direction to yield nucleoside 5'-phosphates.. Its function is as follows. Bidirectionally degrades single-stranded DNA into large acid-insoluble oligonucleotides, which are then degraded further into small acid-soluble oligonucleotides. The protein is Exodeoxyribonuclease 7 small subunit of Streptococcus uberis (strain ATCC BAA-854 / 0140J).